We begin with the raw amino-acid sequence, 359 residues long: Membrane-bound lytic murein transglycosylase C (359 aa).

Positions Met1 to Ser16 are cleaved as a signal peptide. Cys17 carries the N-palmitoyl cysteine lipid modification. The S-diacylglycerol cysteine moiety is linked to residue Cys17.

It belongs to the transglycosylase Slt family.

The protein resides in the cell outer membrane. It catalyses the reaction Exolytic cleavage of the (1-&gt;4)-beta-glycosidic linkage between N-acetylmuramic acid (MurNAc) and N-acetylglucosamine (GlcNAc) residues in peptidoglycan, from either the reducing or the non-reducing ends of the peptidoglycan chains, with concomitant formation of a 1,6-anhydrobond in the MurNAc residue.. Functionally, murein-degrading enzyme. May play a role in recycling of muropeptides during cell elongation and/or cell division. The protein is Membrane-bound lytic murein transglycosylase C of Escherichia coli O7:K1 (strain IAI39 / ExPEC).